Here is a 136-residue protein sequence, read N- to C-terminus: Large ribosomal subunit protein uL16c (136 aa).

This sequence belongs to the universal ribosomal protein uL16 family. Part of the 50S ribosomal subunit.

The protein localises to the plastid. Its subcellular location is the chloroplast. In Oryza nivara (Indian wild rice), this protein is Large ribosomal subunit protein uL16c.